The primary structure comprises 543 residues: CTP synthase (543 aa).

An amidoligase domain region spans residues 1–265; it reads MARYIFITGG…DDEVLAAFAI (265 aa). Ser-13 contributes to the CTP binding site. A UTP-binding site is contributed by Ser-13. 14–19 serves as a coordination point for ATP; sequence SLGKGL. Residue Tyr-54 participates in L-glutamine binding. Asp-71 contributes to the ATP binding site. Residues Asp-71 and Glu-139 each coordinate Mg(2+). CTP is bound by residues 146–148, 186–191, and Lys-222; these read DIE and KTKPTQ. UTP is bound by residues 186–191 and Lys-222; that span reads KTKPTQ. 238–240 is a binding site for ATP; that stretch reads RDA. The 252-residue stretch at 291-542 folds into the Glutamine amidotransferase type-1 domain; it reads TIAIVGKYTG…IEAALVRSRL (252 aa). Gly-353 provides a ligand contact to L-glutamine. The active-site Nucleophile; for glutamine hydrolysis is the Cys-380. Residues 381–384, Glu-404, and Arg-470 contribute to the L-glutamine site; that span reads FGMQ. Catalysis depends on residues His-515 and Glu-517.

Belongs to the CTP synthase family. As to quaternary structure, homotetramer.

The enzyme catalyses UTP + L-glutamine + ATP + H2O = CTP + L-glutamate + ADP + phosphate + 2 H(+). The catalysed reaction is L-glutamine + H2O = L-glutamate + NH4(+). It catalyses the reaction UTP + NH4(+) + ATP = CTP + ADP + phosphate + 2 H(+). The protein operates within pyrimidine metabolism; CTP biosynthesis via de novo pathway; CTP from UDP: step 2/2. Allosterically activated by GTP, when glutamine is the substrate; GTP has no effect on the reaction when ammonia is the substrate. The allosteric effector GTP functions by stabilizing the protein conformation that binds the tetrahedral intermediate(s) formed during glutamine hydrolysis. Inhibited by the product CTP, via allosteric rather than competitive inhibition. In terms of biological role, catalyzes the ATP-dependent amination of UTP to CTP with either L-glutamine or ammonia as the source of nitrogen. Regulates intracellular CTP levels through interactions with the four ribonucleotide triphosphates. The chain is CTP synthase from Rhodopseudomonas palustris (strain HaA2).